The sequence spans 305 residues: Glycine--tRNA ligase alpha subunit (305 aa).

Belongs to the class-II aminoacyl-tRNA synthetase family. In terms of assembly, tetramer of two alpha and two beta subunits.

The protein resides in the cytoplasm. The catalysed reaction is tRNA(Gly) + glycine + ATP = glycyl-tRNA(Gly) + AMP + diphosphate. The sequence is that of Glycine--tRNA ligase alpha subunit from Streptococcus uberis (strain ATCC BAA-854 / 0140J).